Consider the following 287-residue polypeptide: UPF0276 protein ACIAD0933 (287 aa).

This sequence belongs to the UPF0276 family.

This Acinetobacter baylyi (strain ATCC 33305 / BD413 / ADP1) protein is UPF0276 protein ACIAD0933.